The chain runs to 267 residues: Thiamine thiazole synthase (267 aa).

Residues Ser-41, 60–61, Gly-68, Val-132, and 160–162 each bind NAD(+); these read ER and HVD. Fe cation-binding residues include Asp-162 and His-177. Met-227 contacts NAD(+). Arg-237 contacts glycine.

The protein belongs to the THI4 family. In terms of assembly, homooctamer; tetramer of dimers. Fe(2+) is required as a cofactor.

The catalysed reaction is hydrogen sulfide + glycine + NAD(+) = ADP-5-ethyl-4-methylthiazole-2-carboxylate + nicotinamide + 3 H2O + H(+). It functions in the pathway cofactor biosynthesis; thiamine diphosphate biosynthesis. Functionally, involved in the biosynthesis of the thiazole moiety of thiamine. Catalyzes the conversion of NAD and glycine to adenosine diphosphate 5-(2-hydroxyethyl)-4-methylthiazole-2-carboxylate (ADT), an adenylated thiazole intermediate, using free sulfide as a source of sulfur. The sequence is that of Thiamine thiazole synthase from Saccharolobus islandicus (strain M.14.25 / Kamchatka #1) (Sulfolobus islandicus).